The chain runs to 603 residues: MTNVPISRLRNFCIIAHIDHGKSTLADRLLQDTGTVSSRDMQEQFLDNMDLERERGITIKLQAARMNYKADDGEEYVLNLIDTPGHVDFSYEVSRSLQACEGALLVVDASQGVEAQTLANVYLALENDLEIIPVLNKVDLPGADPEKIKNEIESIIGLDTSKAISCSAKTGVGIPEILQAVVDRIPSPKDNTDQATKALIFDSYYDPYRGVIVYFRIMSGGISKKDKVLLMSSKKSYELDEIGVMAPDQVKVNSLHAGEVGYLAASIKAVADARVGDTITLVDRPAQDALPGYAEAKPMVFCGLFPTDADQYPDLRDALDKLQLSDAALKYEPETSSAMGFGFRCGFLGLLHMEIVQERLEREYDLDLIVTAPSVIYKVKMIDGEIRMIDNPATLPDPQKRETIEEPYVRMEIYAPNDYNGTLMGLCQDRRGDFIDMKYITTDRVTLIYEIPLAEVVTDFFDQMKSRTKGYASMEYHLIGYRENDLVRLDVLINSERADPLTTIVHKDNAYGVGKGLVEKLKELIPKQQFKIPLQASIGSRIIASEGISALRKDVLSKCYGGDISRKKKLLKKQAKGKKRMKSMGKVDVPQEAFMAVLKLNKD.

A tr-type G domain is found at 7–189 (SRLRNFCIIA…AVVDRIPSPK (183 aa)). Residues 19-24 (DHGKST) and 136-139 (NKVD) each bind GTP.

This sequence belongs to the TRAFAC class translation factor GTPase superfamily. Classic translation factor GTPase family. LepA subfamily.

It localises to the cell inner membrane. The catalysed reaction is GTP + H2O = GDP + phosphate + H(+). Functionally, required for accurate and efficient protein synthesis under certain stress conditions. May act as a fidelity factor of the translation reaction, by catalyzing a one-codon backward translocation of tRNAs on improperly translocated ribosomes. Back-translocation proceeds from a post-translocation (POST) complex to a pre-translocation (PRE) complex, thus giving elongation factor G a second chance to translocate the tRNAs correctly. Binds to ribosomes in a GTP-dependent manner. In Prochlorococcus marinus (strain NATL2A), this protein is Elongation factor 4.